We begin with the raw amino-acid sequence, 198 residues long: Ribonuclease HII (198 aa).

Residues 14 to 198 (GVIAGVDEVG…RNFAPISRAL (185 aa)) enclose the RNase H type-2 domain. A divalent metal cation contacts are provided by D20, E21, and D112.

The protein belongs to the RNase HII family. Requires Mn(2+) as cofactor. The cofactor is Mg(2+).

It is found in the cytoplasm. It catalyses the reaction Endonucleolytic cleavage to 5'-phosphomonoester.. In terms of biological role, endonuclease that specifically degrades the RNA of RNA-DNA hybrids. This is Ribonuclease HII from Wolbachia sp. subsp. Drosophila simulans (strain wRi).